Consider the following 367-residue polypeptide: Ferredoxin--NADP reductase 2 (367 aa).

Residues D56, Q64, Y69, V109, F144, D309, and T350 each contribute to the FAD site.

The protein belongs to the ferredoxin--NADP reductase type 2 family. In terms of assembly, homodimer. It depends on FAD as a cofactor.

The enzyme catalyses 2 reduced [2Fe-2S]-[ferredoxin] + NADP(+) + H(+) = 2 oxidized [2Fe-2S]-[ferredoxin] + NADPH. The sequence is that of Ferredoxin--NADP reductase 2 from Cupriavidus metallidurans (strain ATCC 43123 / DSM 2839 / NBRC 102507 / CH34) (Ralstonia metallidurans).